Reading from the N-terminus, the 121-residue chain is MARIAGVDIPRDKRVEVALTYIYGIGLTRAKTILTKSGVNPDIRVKDLEDGDVQKLRTALEAFTIEGDLRRQEGMALKRLQDIGCLRGRRHRMSLPVRGQRTRTNARTRRGARKTVAGKKK.

Residues 97-121 (VRGQRTRTNARTRRGARKTVAGKKK) are disordered. The span at 100–121 (QRTRTNARTRRGARKTVAGKKK) shows a compositional bias: basic residues.

Belongs to the universal ribosomal protein uS13 family. Part of the 30S ribosomal subunit. Forms a loose heterodimer with protein S19. Forms two bridges to the 50S subunit in the 70S ribosome.

Located at the top of the head of the 30S subunit, it contacts several helices of the 16S rRNA. In the 70S ribosome it contacts the 23S rRNA (bridge B1a) and protein L5 of the 50S subunit (bridge B1b), connecting the 2 subunits; these bridges are implicated in subunit movement. Contacts the tRNAs in the A and P-sites. This is Small ribosomal subunit protein uS13 from Prochlorococcus marinus (strain MIT 9303).